We begin with the raw amino-acid sequence, 403 residues long: Ribosomal RNA large subunit methyltransferase I (403 aa).

The PUA domain maps to 9 to 86 (YPRLVLSKGR…KAESIDIAFF (78 aa)).

Belongs to the methyltransferase superfamily. RlmI family.

It is found in the cytoplasm. The enzyme catalyses cytidine(1962) in 23S rRNA + S-adenosyl-L-methionine = 5-methylcytidine(1962) in 23S rRNA + S-adenosyl-L-homocysteine + H(+). Functionally, specifically methylates the cytosine at position 1962 (m5C1962) of 23S rRNA. This Salmonella gallinarum (strain 287/91 / NCTC 13346) protein is Ribosomal RNA large subunit methyltransferase I.